The sequence spans 344 residues: tRNA-specific 2-thiouridylase MnmA (344 aa).

Residues 9 to 16 and Met-34 each bind ATP; that span reads AMSGGVDS. Cys-92 functions as the Nucleophile in the catalytic mechanism. A disulfide bridge connects residues Cys-92 and Cys-188. Gly-116 serves as a coordination point for ATP. Residues 138-140 form an interaction with tRNA region; the sequence is KDQ. Cys-188 serves as the catalytic Cysteine persulfide intermediate.

It belongs to the MnmA/TRMU family.

It localises to the cytoplasm. The catalysed reaction is S-sulfanyl-L-cysteinyl-[protein] + uridine(34) in tRNA + AH2 + ATP = 2-thiouridine(34) in tRNA + L-cysteinyl-[protein] + A + AMP + diphosphate + H(+). Functionally, catalyzes the 2-thiolation of uridine at the wobble position (U34) of tRNA, leading to the formation of s(2)U34. The protein is tRNA-specific 2-thiouridylase MnmA of Desulfotalea psychrophila (strain LSv54 / DSM 12343).